A 263-amino-acid polypeptide reads, in one-letter code: Acetylglutamate kinase (263 aa).

Residues 48–49, Arg70, and Asn162 contribute to the substrate site; that span reads GG.

Belongs to the acetylglutamate kinase family. ArgB subfamily.

Its subcellular location is the cytoplasm. It carries out the reaction N-acetyl-L-glutamate + ATP = N-acetyl-L-glutamyl 5-phosphate + ADP. Its pathway is amino-acid biosynthesis; L-arginine biosynthesis; N(2)-acetyl-L-ornithine from L-glutamate: step 2/4. In terms of biological role, catalyzes the ATP-dependent phosphorylation of N-acetyl-L-glutamate. This is Acetylglutamate kinase from Vibrio parahaemolyticus serotype O3:K6 (strain RIMD 2210633).